Here is a 248-residue protein sequence, read N- to C-terminus: Small ribosomal subunit protein uS2 (248 aa).

The protein belongs to the universal ribosomal protein uS2 family.

This chain is Small ribosomal subunit protein uS2, found in Dechloromonas aromatica (strain RCB).